Reading from the N-terminus, the 722-residue chain is Formin-like protein 16 (722 aa).

Disordered stretches follow at residues 1 to 56, 564 to 606, 635 to 672, and 690 to 722; these read MSPV…PMFD, ATED…PSRP, VGSP…HLSH, and PLLV…LRYQ. Positions 22–55 are enriched in pro residues; it reads PLPPPPPPPMRRSAPSPPPMSGRVPPPPPPPPMF. The 390-residue stretch at 182-571 folds into the FH2 domain; sequence FRCPVTKRSS…KAATEDVFGG (390 aa). Pro residues-rich tracts occupy residues 593–605, 638–658, and 709–722; these read IRPP…PPSR, PSPP…PPPM, and APPP…LRYQ.

It belongs to the formin-like family. Class-II subfamily.

This Arabidopsis thaliana (Mouse-ear cress) protein is Formin-like protein 16 (FH16).